A 141-amino-acid polypeptide reads, in one-letter code: Large-conductance mechanosensitive channel (141 aa).

The next 3 helical transmembrane spans lie at 14 to 34, 38 to 58, and 81 to 101; these read VMDLAVGVIIGGAFGGIVKSL, IIMPIVGAIFGGFDFSNYFLG, and GSFITVLINFLILAWIIFLMV.

The protein belongs to the MscL family. In terms of assembly, homopentamer.

The protein resides in the cell inner membrane. In terms of biological role, channel that opens in response to stretch forces in the membrane lipid bilayer. May participate in the regulation of osmotic pressure changes within the cell. The polypeptide is Large-conductance mechanosensitive channel (Rhizobium rhizogenes (strain K84 / ATCC BAA-868) (Agrobacterium radiobacter)).